Here is a 76-residue protein sequence, read N- to C-terminus: Conotoxin Gla(1)-TxVI (76 aa).

Residues 1–19 (MEKLTILLLVAAVLMSTQA) form the signal peptide. A propeptide spanning residues 20–45 (LVERAGENHSKENINFLLKRKRAADR) is cleaved from the precursor. Trp-48 is subject to 6'-bromotryptophan. The residue at position 50 (Glu-50) is a 4-carboxyglutamate. 3 disulfides stabilise this stretch: Cys-51–Cys-65, Cys-58–Cys-69, and Cys-64–Cys-73. Pro-61 bears the 4-hydroxyproline mark. 3 positions are modified to 4-carboxyglutamate: Glu-63, Glu-67, and Glu-70. The residue at position 76 (Trp-76) is a 6'-bromotryptophan.

As to expression, expressed by the venom duct.

Its subcellular location is the secreted. This chain is Conotoxin Gla(1)-TxVI, found in Conus textile (Cloth-of-gold cone).